The chain runs to 385 residues: MDVQKWYLRTSKLALALAIIRSKPADKSSREYTEHLAMLLSEEQSKWRSKVEILEAEVMQLRQKLLVSRLCSGSFKSGYVSSQLEAQEPKSSESTLTSMEDSGCDLSNEQRTESSDLSQHFVESCTPTHFPPLPLVKRPCAILQNPLSSHMQFLQYLLELKNLTESGNLKRDLTHFEKDSSTVSDSVFQLLDGLITFYRNPKLPFSRFWTEAVGTLASLISDYNLSSHILKKCSKKLEEFEKTLLHAILGNNHINQFQVQHYVSQSLVTLGNCSLLRKSIISLLLSEVNGFADDLGAINQEQASYDVSRYENIFYLFWVLEQLLQKETEEGNTSSIGHDDQEIKKFLQKHDETIFQLSDAFPLFTFYLWRVGILLSSAQIETLRK.

An interaction with REC114 region spans residues 1–126 (MDVQKWYLRT…LSQHFVESCT (126 aa)). The disordered stretch occupies residues 86-110 (AQEPKSSESTLTSMEDSGCDLSNEQ). Polar residues predominate over residues 92-107 (SESTLTSMEDSGCDLS).

It belongs to the MEI4L family. As to quaternary structure, part of the MCD recombinosome complex, at least composed of IHO1, REC114 and MEI4. Forms a complex with REC114; the interaction is required for MEI4 stability. Interacts (via N-terminal domain) with REC114 (via C-terminal domain). Interacts with IHO1.

The protein localises to the chromosome. Required for DNA double-strand breaks (DSBs) formation in unsynapsed regions during meiotic recombination. Probably acts by forming a complex with IHO1 and REC114, which activates DSBs formation in unsynapsed regions, an essential step to ensure completion of synapsis. In Homo sapiens (Human), this protein is Meiosis-specific protein MEI4.